A 159-amino-acid chain; its full sequence is Ribosomal RNA large subunit methyltransferase H (159 aa).

Residues Leu-76, Gly-108, and 127-132 contribute to the S-adenosyl-L-methionine site; that span reads FGKLTM.

Belongs to the RNA methyltransferase RlmH family. Homodimer.

Its subcellular location is the cytoplasm. The enzyme catalyses pseudouridine(1915) in 23S rRNA + S-adenosyl-L-methionine = N(3)-methylpseudouridine(1915) in 23S rRNA + S-adenosyl-L-homocysteine + H(+). Specifically methylates the pseudouridine at position 1915 (m3Psi1915) in 23S rRNA. This is Ribosomal RNA large subunit methyltransferase H from Lacticaseibacillus casei (strain BL23) (Lactobacillus casei).